Here is a 195-residue protein sequence, read N- to C-terminus: Thymidylate kinase (195 aa).

An ATP-binding site is contributed by 7-14 (GIDGVGKS).

The protein belongs to the thymidylate kinase family.

The enzyme catalyses dTMP + ATP = dTDP + ADP. Phosphorylation of dTMP to form dTDP in both de novo and salvage pathways of dTTP synthesis. In Campylobacter concisus (strain 13826), this protein is Thymidylate kinase.